Consider the following 369-residue polypeptide: Glutamate 5-kinase (369 aa).

Lys-11 contributes to the ATP binding site. Residues Ser-51, Asp-138, and Asn-150 each coordinate substrate. ATP contacts are provided by residues 170–171 and 212–218; these read TD and TGGMATK. The 79-residue stretch at 277–355 folds into the PUA domain; the sequence is NGTIVIDDGA…QDIYAVLGYE (79 aa).

It belongs to the glutamate 5-kinase family.

It localises to the cytoplasm. The catalysed reaction is L-glutamate + ATP = L-glutamyl 5-phosphate + ADP. It participates in amino-acid biosynthesis; L-proline biosynthesis; L-glutamate 5-semialdehyde from L-glutamate: step 1/2. Functionally, catalyzes the transfer of a phosphate group to glutamate to form L-glutamate 5-phosphate. The polypeptide is Glutamate 5-kinase (Aliivibrio salmonicida (strain LFI1238) (Vibrio salmonicida (strain LFI1238))).